Here is a 693-residue protein sequence, read N- to C-terminus: MATDLSSSSTLLLSRNCKTPPFYHTTNSLSLSKTHHLYASRNAVVSRLRLLCQTTGSTQSTPTSGVSDLQFAAQVGQHRLSKVPISNIRNFCIIAHIDHGKSTLADKLLQVTGTVQQREMKEQFLDNMDLERERGITIKLQAARMRYVYENKPYCLNLIDTPGHVDFSYEVSRSLAACEGALLVVDASQGVEAQTLANVYLALENNLEIIPVLNKIDLPGSEPDRVIQEIEEVIGLDCSNAIRCSAKEGIGIIDILNAIVERIPSPRNTAEMPLRTLIFDSYYDPYRGVIVYFRVLDGSIKKGDRIYFMASKKDYFADEIGVLSPNQMQVEELYAGEVGYLSASIRSVADARVGDTITHYNRRAQSSLPGYKEATPMVFCGLFPVDADQFPEVRDALEKLQLNDAALKFEPETSSAMGFGFRCGFLGLLHMEIVQERLEREYNLSLITTAPSVVYRVNCVDGDTVECSNPSLLPEPGKRRSIEEPLVKIEMLTPKDYIGPLMELAQDRRGEFKEMRFITNSRASITYELPLAEMVGDFFDQLKSRSKGYASMEYTFIGYKESDLIKLEIQINGDPVEPLATIVHKDKAYPVGRALTQKLKELIPRQMFKVPIQACIGSKVIASEALPAIRKDVLAKCYGGDISRKKKLLKKQAEGKKRMKAIGKVDVPQEAFMAVLKLEKKPWSYKYKMSVNC.

The transit peptide at 1-51 (MATDLSSSSTLLLSRNCKTPPFYHTTNSLSLSKTHHLYASRNAVVSRLRLL) directs the protein to the chloroplast. The 182-residue stretch at 86 to 267 (SNIRNFCIIA…AIVERIPSPR (182 aa)) folds into the tr-type G domain. GTP-binding positions include 95-102 (AHIDHGKS), 160-164 (DTPGH), and 214-217 (NKID).

This sequence belongs to the TRAFAC class translation factor GTPase superfamily. Classic translation factor GTPase family. LepA subfamily.

The protein resides in the plastid. It is found in the chloroplast. It catalyses the reaction GTP + H2O = GDP + phosphate + H(+). In terms of biological role, promotes chloroplast protein synthesis. May act as a fidelity factor of the translation reaction, by catalyzing a one-codon backward translocation of tRNAs on improperly translocated ribosomes. This is Translation factor GUF1 homolog, chloroplastic from Ricinus communis (Castor bean).